Here is a 726-residue protein sequence, read N- to C-terminus: Catalase-peroxidase (726 aa).

The span at 1 to 12 shows a compositional bias: polar residues; it reads MSTPSDQHNTLS. Residues 1–34 are disordered; sequence MSTPSDQHNTLSAGKCPFHQGNSNQTAGGGTSSR. Residues 105–226 constitute a cross-link (tryptophyl-tyrosyl-methioninium (Trp-Tyr) (with M-252)); the sequence is WHSAGTYRSA…LGATEMGLIY (122 aa). The active-site Proton acceptor is the His-106. A cross-link (tryptophyl-tyrosyl-methioninium (Tyr-Met) (with W-105)) is located at residues 226–252; that stretch reads YVNPEGPNHSGDPASAAPAIRATFGNM. Position 267 (His-267) interacts with heme b.

This sequence belongs to the peroxidase family. Peroxidase/catalase subfamily. As to quaternary structure, homodimer or homotetramer. Heme b serves as cofactor. Formation of the three residue Trp-Tyr-Met cross-link is important for the catalase, but not the peroxidase activity of the enzyme.

The enzyme catalyses H2O2 + AH2 = A + 2 H2O. The catalysed reaction is 2 H2O2 = O2 + 2 H2O. Its function is as follows. Bifunctional enzyme with both catalase and broad-spectrum peroxidase activity. This chain is Catalase-peroxidase, found in Cronobacter sakazakii (strain ATCC BAA-894) (Enterobacter sakazakii).